Consider the following 632-residue polypeptide: MAU2 chromatid cohesion factor homolog (632 aa).

TPR repeat units lie at residues glycine 453–glutamate 486 and serine 493–isoleucine 526.

This sequence belongs to the SCC4/mau-2 family. As to quaternary structure, interacts with Nipped-B to form the cohesin loading complex.

Its subcellular location is the nucleus. The protein resides in the nucleoplasm. Its function is as follows. Required for association of the cohesin complex with chromatin during interphase. Plays a role in sister chromatid cohesion and normal progression through prometaphase. In Drosophila erecta (Fruit fly), this protein is MAU2 chromatid cohesion factor homolog.